Here is a 2690-residue protein sequence, read N- to C-terminus: Probable polyketide synthase 28 (2690 aa).

Residues 15-443 (YGDVAVIGIG…GSNVCLILSE (429 aa)) enclose the Ketosynthase family 3 (KS3) domain. Catalysis depends on for beta-ketoacyl synthase activity residues Cys187, His326, and His366. The tract at residues 651–684 (GVSADIIVGHSLGELSSSYSSGMIDFETLCHLIY) is acyl/malonyl transferases. The active-site For acyl/malonyl transferase activity is the Ser661. Residues 906-934 (NFKSQLTNINNNNNNINNNNNNNNNNNNN) adopt a coiled-coil conformation. The interval 916–946 (NNNNNINNNNNNNNNNNNNNNNNNNNNNNNN) is disordered. Residues 973–1102 (HEKITNEGPS…GNFSLFKHNS (130 aa)) form an N-terminal hotdog fold region. The PKS/mFAS DH domain maps to 973–1285 (HEKITNEGPS…CSSVSLANPS (313 aa)). The Proton acceptor; for dehydratase activity role is filled by His1014. The segment at 1119 to 1285 (NFTTISKHDF…CSSVSLANPS (167 aa)) is C-terminal hotdog fold. Asp1188 functions as the Proton donor; for dehydratase activity in the catalytic mechanism. The interval 1401–1429 (LNHHNNSENKNKNNNNNNNSNNNENSNNE) is disordered. Low complexity predominate over residues 1412–1429 (KNNNNNNNSNNNENSNNE). In terms of domain architecture, Carrier spans 2594–2671 (SDNEFIHSTI…QSIDIIKFGY (78 aa)). The residue at position 2631 (Ser2631) is an O-(pantetheine 4'-phosphoryl)serine.

Pantetheine 4'-phosphate is required as a cofactor.

Its function is as follows. Probable polyketide synthase. This chain is Probable polyketide synthase 28 (pks28), found in Dictyostelium discoideum (Social amoeba).